We begin with the raw amino-acid sequence, 192 residues long: Lipid A acyltransferase PagP (192 aa).

The signal sequence occupies residues 1–24 (MWLRFCAPALMAWYWVFFPSTSQA). Active-site residues include His63, Asp106, and Ser107.

Belongs to the lipid A palmitoyltransferase family. In terms of assembly, homodimer.

It localises to the cell outer membrane. The enzyme catalyses a lipid A + a 1,2-diacyl-sn-glycero-3-phosphocholine = a hepta-acyl lipid A + a 2-acyl-sn-glycero-3-phosphocholine. It carries out the reaction a lipid IVA + a 1,2-diacyl-sn-glycero-3-phosphocholine = a lipid IVB + a 2-acyl-sn-glycero-3-phosphocholine. The catalysed reaction is a lipid IIA + a 1,2-diacyl-sn-glycero-3-phosphocholine = a lipid IIB + a 2-acyl-sn-glycero-3-phosphocholine. Transfers a fatty acid residue from the sn-1 position of a phospholipid to the N-linked hydroxyfatty acid chain on the proximal unit of lipid A or its precursors. This chain is Lipid A acyltransferase PagP, found in Musicola paradisiaca (strain Ech703) (Dickeya paradisiaca).